Reading from the N-terminus, the 178-residue chain is N-alpha-acetyltransferase 20 (178 aa).

The 156-residue stretch at 2–157 folds into the N-acetyltransferase domain; the sequence is TSLRPFTCDD…DAYDMRKALS (156 aa). The disordered stretch occupies residues 159–178; sequence DTEKKSIVPLPHPVRPEDIE.

The protein belongs to the acetyltransferase family. ARD1 subfamily. As to quaternary structure, component of the N-terminal acetyltransferase B (NatB) complex which is composed of naa20 and naa25.

Its subcellular location is the cytoplasm. The protein resides in the nucleus. The catalysed reaction is N-terminal L-methionyl-L-asparaginyl-[protein] + acetyl-CoA = N-terminal N(alpha)-acetyl-L-methionyl-L-asparaginyl-[protein] + CoA + H(+). It catalyses the reaction N-terminal L-methionyl-L-glutaminyl-[protein] + acetyl-CoA = N-terminal N(alpha)-acetyl-L-methionyl-L-glutaminyl-[protein] + CoA + H(+). It carries out the reaction N-terminal L-methionyl-L-aspartyl-[protein] + acetyl-CoA = N-terminal N(alpha)-acetyl-L-methionyl-L-aspartyl-[protein] + CoA + H(+). The enzyme catalyses N-terminal L-methionyl-L-glutamyl-[protein] + acetyl-CoA = N-terminal N(alpha)-acetyl-L-methionyl-L-glutamyl-[protein] + CoA + H(+). Its function is as follows. Catalytic subunit of the NatB complex which catalyzes acetylation of the N-terminal methionine residues of peptides beginning with Met-Asp, Met-Glu, Met-Asn and Met-Gln. Proteins with cell cycle functions are overrepresented in the pool of NatB substrates. Required for maintaining the structure and function of actomyosin fibers and for proper cellular migration. The sequence is that of N-alpha-acetyltransferase 20 (naa20) from Xenopus tropicalis (Western clawed frog).